Here is a 403-residue protein sequence, read N- to C-terminus: Stearoyl-[acyl-carrier-protein] 9-desaturase 4, chloroplastic (403 aa).

The transit peptide at 1–44 (MALLLNSTMTVAMKQNPATAVSFMQTTCLGSSFSPPRHLQVSCV) directs the protein to the chloroplast. Residues Glu140, Glu178, His181, Glu231, Glu264, and His267 each contribute to the Fe cation site.

Belongs to the fatty acid desaturase type 2 family. Homodimer. Fe(2+) serves as cofactor. In terms of tissue distribution, preferentially expressed in roots.

The protein localises to the plastid. The protein resides in the chloroplast. It carries out the reaction octadecanoyl-[ACP] + 2 reduced [2Fe-2S]-[ferredoxin] + O2 + 2 H(+) = (9Z)-octadecenoyl-[ACP] + 2 oxidized [2Fe-2S]-[ferredoxin] + 2 H2O. It participates in lipid metabolism; fatty acid metabolism. Its function is as follows. Converts stearoyl-ACP to oleoyl-ACP by introduction of a cis double bond between carbons 9 and 10 of the acyl chain. The sequence is that of Stearoyl-[acyl-carrier-protein] 9-desaturase 4, chloroplastic (S-ACP-DES4) from Arabidopsis thaliana (Mouse-ear cress).